Reading from the N-terminus, the 359-residue chain is MQTLADLLNTIPAIDPAAMSRAQRHIDGLLKPVGSLGRLEALAIQLAGMPGLNGIPHVGKKAVLVMCADHGVWEEGVAISPKEVTAIQAENMTRGTTGVCVLAAQAGANVYVIDVGIDTAEPIPGLINMRVARGSGNIASAPAMSRHQAEKLLLDVICYTRELAKNGVTLFGVGELGMANTTPAAAIVSTITGRAPEEVVGIGANLPTDKLANKIDVVRRAITLNQPNPQDGVDVLAKVGGFDLVGMAGVMLGAASCGLPVLLDGFLSYAAALAACQMSPAIKPYLIPSHLSAEKGARIALSHLGLEPFLNMEMRLGEGSGAALAMPIIEAACAIYNNMGELAASNIVLPGNTTSDLNS.

Glu-318 (proton acceptor) is an active-site residue.

Belongs to the CobT family. Homodimer.

It catalyses the reaction 5,6-dimethylbenzimidazole + nicotinate beta-D-ribonucleotide = alpha-ribazole 5'-phosphate + nicotinate + H(+). The protein operates within nucleoside biosynthesis; alpha-ribazole biosynthesis; alpha-ribazole from 5,6-dimethylbenzimidazole: step 1/2. Its function is as follows. Catalyzes the synthesis of alpha-ribazole-5'-phosphate from nicotinate mononucleotide (NAMN) and 5,6-dimethylbenzimidazole (DMB). The polypeptide is Nicotinate-nucleotide--dimethylbenzimidazole phosphoribosyltransferase (Escherichia coli (strain SMS-3-5 / SECEC)).